The primary structure comprises 82 residues: Small ribosomal subunit protein bS16 (82 aa).

The protein belongs to the bacterial ribosomal protein bS16 family.

In Tolumonas auensis (strain DSM 9187 / NBRC 110442 / TA 4), this protein is Small ribosomal subunit protein bS16.